A 638-amino-acid chain; its full sequence is uncharacterized protein (638 aa).

Positions Met-1–Lys-138 constitute a CID domain. Disordered stretches follow at residues Gln-318–Ser-338 and Leu-615–Lys-638.

This is an uncharacterized protein from Schizosaccharomyces pombe (strain 972 / ATCC 24843) (Fission yeast).